The primary structure comprises 1368 residues: DNA-directed RNA polymerase subunit beta (1368 aa).

Belongs to the RNA polymerase beta chain family. In terms of assembly, the RNAP catalytic core consists of 2 alpha, 1 beta, 1 beta' and 1 omega subunit. When a sigma factor is associated with the core the holoenzyme is formed, which can initiate transcription.

The catalysed reaction is RNA(n) + a ribonucleoside 5'-triphosphate = RNA(n+1) + diphosphate. Functionally, DNA-dependent RNA polymerase catalyzes the transcription of DNA into RNA using the four ribonucleoside triphosphates as substrates. This chain is DNA-directed RNA polymerase subunit beta, found in Syntrophotalea carbinolica (strain DSM 2380 / NBRC 103641 / GraBd1) (Pelobacter carbinolicus).